The chain runs to 361 residues: Hydroxyproline O-arabinosyltransferase PLENTY (361 aa).

A helical; Signal-anchor transmembrane segment spans residues 13 to 33 (LLMLLMVLGFFFATYNLVSMI).

Its subcellular location is the golgi apparatus membrane. It carries out the reaction trans-4-hydroxy-L-prolyl-[protein] + UDP-beta-L-arabinofuranose = O-(beta-L-arabinofuranosyl)-trans-4-hydroxy-L-prolyl-[protein] + UDP + H(+). Functionally, glycosyltransferase involved in the O-arabinosylation of several proteins including extensins and small signaling peptides. Catalyzes the transfer of the initial L-arabinose to the hydroxyl group of Hyp residues. Probably involved in the arabinosylation of CLAVATA3/ESR-related (CLE) signaling peptides that move from root to shoot, to interact with receptor kinase signaling that regulates nodulation. Involved in long distance nodulation signaling events. Involved in the autoregulation of nodulation (AON), a long distance systemic signaling from root to shoot and back again, which allows legumes to limit the number of root nodules formed based on available nitrogen and previous rhizobial colonization. This Lotus japonicus (Lotus corniculatus var. japonicus) protein is Hydroxyproline O-arabinosyltransferase PLENTY.